The following is a 265-amino-acid chain: 5'-nucleotidase SurE (265 aa).

Residues D12, D13, S43, and N91 each contribute to the a divalent metal cation site.

It belongs to the SurE nucleotidase family. Requires a divalent metal cation as cofactor.

The protein resides in the cytoplasm. It catalyses the reaction a ribonucleoside 5'-phosphate + H2O = a ribonucleoside + phosphate. Functionally, nucleotidase that shows phosphatase activity on nucleoside 5'-monophosphates. The chain is 5'-nucleotidase SurE from Haloquadratum walsbyi (strain DSM 16790 / HBSQ001).